A 552-amino-acid polypeptide reads, in one-letter code: Gamma-aminobutyric acid receptor subunit alpha-4 (552 aa).

The N-terminal stretch at 1–35 (MVSVQKVPAIVLCSGVSLALLHVLCLATCLNESPG) is a signal peptide. The Extracellular segment spans residues 36–259 (QNSKDEKLCP…FHLRRKMGYF (224 aa)). Residue Asn47 is glycosylated (N-linked (GlcNAc...) asparagine). 4-aminobutanoate is bound at residue Arg100. N-linked (GlcNAc...) asparagine glycosylation is found at Asn144 and Asn157. Position 163 (Thr163) interacts with 4-aminobutanoate. Cysteines 172 and 186 form a disulfide. The helical transmembrane segment at 260–280 (MIQTYIPCIMTVILSQVSFWI) threads the bilayer. Residues 281–284 (NKES) are Cytoplasmic-facing. Residues 285–305 (VPARTVFGITTVLTMTTLSIS) form a helical membrane-spanning segment. The Extracellular segment spans residues 306–318 (ARHSLPKVSYATA). The chain crosses the membrane as a helical span at residues 319 to 341 (MDWFIAVCFAFVFSALIEFAAVN). Residues 342–515 (YFTNIQMQKA…PPPSGSGTSK (174 aa)) are Cytoplasmic-facing. Disordered stretches follow at residues 353-436 (KKIS…NPFS), 448-470 (ARGLSSAASPSPHGTLQPAPLRS), and 486-513 (TTVNTTGVPGNVSATPPPSAPPPSGSGT). Polar residues predominate over residues 403–423 (RTEVGNHSSKTTAAQESSETT). Composition is skewed to low complexity over residues 448-458 (ARGLSSAASPS) and 486-499 (TTVNTTGVPGNVSA). The segment covering 500-509 (TPPPSAPPPS) has biased composition (pro residues). A helical transmembrane segment spans residues 516-538 (IDKYARILFPVTFGAFNMVYWVV). The Extracellular portion of the chain corresponds to 539–552 (YLSKDTMEKSESLM).

This sequence belongs to the ligand-gated ion channel (TC 1.A.9) family. Gamma-aminobutyric acid receptor (TC 1.A.9.5) subfamily. GABRA4 sub-subfamily. In terms of assembly, heteropentamer, formed by a combination of alpha (GABRA1-6), beta (GABRB1-3), gamma (GABRG1-3), delta (GABRD), epsilon (GABRE), rho (GABRR1-3), pi (GABRP) and theta (GABRQ) chains, each subunit exhibiting distinct physiological and pharmacological properties. Expressed in the brain.

The protein resides in the cell membrane. Its subcellular location is the postsynaptic cell membrane. Potentiated by histamine. Alpha subunit of the heteropentameric ligand-gated chloride channel gated by gamma-aminobutyric acid (GABA), a major inhibitory neurotransmitter in the brain. GABA-gated chloride channels, also named GABA(A) receptors (GABAAR), consist of five subunits arranged around a central pore and contain GABA active binding site(s) located at the alpha and beta subunit interface(s). Alpha-4/GABRA4 subunit often assembles with delta or gamma-2 subunits, in combination with beta subunits. When activated by GABA, GABAARs selectively allow the flow of chloride anions across the cell membrane down their electrochemical gradient. GABAARs containing alpha-4 are predominantly extrasynaptic, contributing to tonic inhibition in dentate granule cells and thalamic relay neurons. Extrasynaptic alpha-4-containing GABAARs control levels of excitability and network activity. GABAAR containing alpha-4-beta-3-delta subunits can simultaneously bind GABA and histamine where histamine binds at the interface of two neighboring beta subunits, which may be involved in the regulation of sleep and wakefulness. The polypeptide is Gamma-aminobutyric acid receptor subunit alpha-4 (Rattus norvegicus (Rat)).